The following is a 321-amino-acid chain: MTKFALVGDVGGTNARLALCDLASGEISRAKTYSGLDYPSLEAVVRVYLEEHQVTVNEGCIAIACPITGDWVAMTNHTWAFSIAEMKRNLGFAHLEIINDFTAVSMAIPMLKAEHLIQFGGSAPVAGKPIAVYGAGTGLGVAHLVHVDKRWVSLPGEGGHVDFAPNSEEEGIILEELRAELGHVSAERVLSGPGLVNLYRAIVKSDGRLPENLQPREVTERALADSCTDCRRALSLFCVIMGRFGGNLALTLGTFGGVYIAGGIVPRFLEFFKASGFRGGFEDKGRFKAYVQDIPVYLIVHDNPGLLGSGAHLRQTLGQVL.

8–13 (GDVGGT) is an ATP binding site.

It belongs to the bacterial glucokinase family.

It localises to the cytoplasm. The enzyme catalyses D-glucose + ATP = D-glucose 6-phosphate + ADP + H(+). This Klebsiella pneumoniae subsp. pneumoniae (strain ATCC 700721 / MGH 78578) protein is Glucokinase.